Consider the following 55-residue polypeptide: Large ribosomal subunit protein bL33 (55 aa).

It belongs to the bacterial ribosomal protein bL33 family.

The sequence is that of Large ribosomal subunit protein bL33 from Ruegeria sp. (strain TM1040) (Silicibacter sp.).